The primary structure comprises 589 residues: Kelch-like protein 25 (589 aa).

The BTB domain occupies 46–114 (TDVTLWAGDR…AYSSRIAINE (69 aa)). In terms of domain architecture, BACK spans 149 to 250 (CLGMMLLSDA…LPSDCLQEAV (102 aa)). Kelch repeat units follow at residues 296–340 (TLLI…AIGC), 341–388 (KVYV…ELEN), 389–444 (CLYV…SAKL), 446–492 (LFVF…VLGS), 494–538 (IFIM…ASGN), and 539–585 (KLYV…STWK).

In terms of assembly, component of the BCR(KLHL25) E3 ubiquitin ligase complex, at least composed of CUL3, KLHL25 and RBX1.

It functions in the pathway protein modification; protein ubiquitination. Functionally, substrate-specific adapter of a BCR (BTB-CUL3-RBX1) E3 ubiquitin ligase complex involved in various processes, such as translation homeostasis and lipid synthesis. The BCR(KLHL25) ubiquitin ligase complex acts by mediating ubiquitination of hypophosphorylated EIF4EBP1 (4E-BP1): ubiquitination and subsequent degradation of hypophosphorylated EIF4EBP1 (4E-BP1) probably serves as a homeostatic mechanism to maintain translation and prevent eIF4E inhibition when eIF4E levels are low. The BCR(KLHL25) complex does not target EIF4EBP1 (4E-BP1) when it is hyperphosphorylated or associated with eIF4E. The BCR(KLHL25) complex also acts as a regulator of lipid synthesis by mediating ubiquitination and degradation of ACLY, thereby inhibiting lipid synthesis. BCR(KLHL25)-mediated degradation of ACLY promotes fatty acid oxidation and is required for differentiation of inducible regulatory T (iTreg) cells. This is Kelch-like protein 25 from Homo sapiens (Human).